Reading from the N-terminus, the 76-residue chain is Acyl carrier protein (76 aa).

One can recognise a Carrier domain in the interval 1–76 (MATFDDVKDV…AAIDYIESKQ (76 aa)). Position 36 is an O-(pantetheine 4'-phosphoryl)serine (S36).

It belongs to the acyl carrier protein (ACP) family. 4'-phosphopantetheine is transferred from CoA to a specific serine of apo-ACP by AcpS. This modification is essential for activity because fatty acids are bound in thioester linkage to the sulfhydryl of the prosthetic group.

The protein resides in the cytoplasm. It participates in lipid metabolism; fatty acid biosynthesis. Its function is as follows. Carrier of the growing fatty acid chain in fatty acid biosynthesis. This Deinococcus deserti (strain DSM 17065 / CIP 109153 / LMG 22923 / VCD115) protein is Acyl carrier protein.